Consider the following 234-residue polypeptide: Phosphoribosylaminoimidazole-succinocarboxamide synthase (234 aa).

The protein belongs to the SAICAR synthetase family.

The enzyme catalyses 5-amino-1-(5-phospho-D-ribosyl)imidazole-4-carboxylate + L-aspartate + ATP = (2S)-2-[5-amino-1-(5-phospho-beta-D-ribosyl)imidazole-4-carboxamido]succinate + ADP + phosphate + 2 H(+). Its pathway is purine metabolism; IMP biosynthesis via de novo pathway; 5-amino-1-(5-phospho-D-ribosyl)imidazole-4-carboxamide from 5-amino-1-(5-phospho-D-ribosyl)imidazole-4-carboxylate: step 1/2. This Streptococcus pyogenes serotype M1 protein is Phosphoribosylaminoimidazole-succinocarboxamide synthase.